Here is a 297-residue protein sequence, read N- to C-terminus: Phosphatidylglycerol--prolipoprotein diacylglyceryl transferase (297 aa).

A run of 4 helical transmembrane segments spans residues Phe-20 to Ile-40, Glu-57 to Phe-77, Trp-107 to Phe-127, and Ile-133 to Gly-153. Arg-154 is an a 1,2-diacyl-sn-glycero-3-phospho-(1'-sn-glycerol) binding site. The next 3 membrane-spanning stretches (helical) occupy residues Pro-193–Phe-213, Gly-225–Leu-245, and Ala-266–Leu-286.

The protein belongs to the Lgt family.

It localises to the cell inner membrane. It catalyses the reaction L-cysteinyl-[prolipoprotein] + a 1,2-diacyl-sn-glycero-3-phospho-(1'-sn-glycerol) = an S-1,2-diacyl-sn-glyceryl-L-cysteinyl-[prolipoprotein] + sn-glycerol 1-phosphate + H(+). Its pathway is protein modification; lipoprotein biosynthesis (diacylglyceryl transfer). Catalyzes the transfer of the diacylglyceryl group from phosphatidylglycerol to the sulfhydryl group of the N-terminal cysteine of a prolipoprotein, the first step in the formation of mature lipoproteins. The chain is Phosphatidylglycerol--prolipoprotein diacylglyceryl transferase from Prochlorococcus marinus (strain MIT 9301).